Reading from the N-terminus, the 457-residue chain is Aromatic amino acid permease FywP (457 aa).

12 helical membrane-spanning segments follow: residues 16–36 (IVML…SGKV), 43–63 (SVLL…YGVG), 91–111 (FADW…EAGV), 114–134 (FLAI…VAVL), 154–174 (AFIK…LLVI), 205–225 (GFLT…LAAI), 243–263 (GVLI…LHLL), 292–312 (IVLV…IYAT), 342–362 (NAIL…AVLG), 373–393 (ISFT…VLYF), 403–423 (VKLA…MQII), and 424–444 (TNPW…YFSY).

The protein belongs to the amino acid-polyamine-organocation (APC) superfamily. Amino acid transporter (AAT) (TC 2.A.3.1) family.

It is found in the cell membrane. In terms of biological role, involved in phenylalanine and tyrosine uptake. Also has affinity for tryptophan. Plays no significant role in the excretion of accumulated phenylalanine. The chain is Aromatic amino acid permease FywP from Lactococcus lactis subsp. cremoris (strain MG1363).